A 414-amino-acid chain; its full sequence is MLSFRSLTSTFGFVSRFQIRRLGTSLSIQNLEVQDGRWKGKLATEKKTNREHKSVDTNIKTMKMLKNPKNSTRYLRRSFVPNHRKQENGRDILEDSLSKDHLKVKSCITITTGEGYDLKRCMKLLTMQGLQPTNLIPDEIVSFSYQDNGNKGDVMILGQNGSIVSWGFSESSVRNCIVPIVKAASLNPLNGEDFETEDMDYVEIEGEQDFDKLSSLDNKVTPRIACESFLSGDLIIINSLDSDQGMLDKAAFSSGLSRSTNLAVLEEAMEKHISKTRTITENISKGTKLNLRSSDALKSIGRLFLIRGKLNLYSELIETPDLYWSEPQLEEIFKNVSRYLDIGPRINILNSKLDYSTDECRALISLLNERNSTFLEWIIIYLIAFELCFEIYHFYQKYSSYCSEPTNDDLDATK.

Residues M1 to Q29 constitute a mitochondrion transit peptide. Over N30–T373 the chain is Mitochondrial matrix. A helical membrane pass occupies residues F374 to F394. Residues Y395–K414 are Mitochondrial intermembrane-facing.

The protein belongs to the RMD1/sif2 family. Associates with the mitochondrial ribosome.

The protein localises to the mitochondrion inner membrane. In terms of biological role, component of MIOREX complexes, large expressome-like assemblies of ribosomes with factors involved in all the steps of post-transcriptional gene expression. The sequence is that of MIOREX complex component 10 from Saccharomyces cerevisiae (strain ATCC 204508 / S288c) (Baker's yeast).